The primary structure comprises 466 residues: Ribulose bisphosphate carboxylase large chain (466 aa).

The residue at position 5 (lysine 5) is an N6,N6,N6-trimethyllysine. Residues asparagine 114 and threonine 164 each contribute to the substrate site. Catalysis depends on lysine 166, which acts as the Proton acceptor. Lysine 168 contacts substrate. 3 residues coordinate Mg(2+): lysine 192, aspartate 194, and glutamate 195. Lysine 192 is subject to N6-carboxylysine. The Proton acceptor role is filled by histidine 285. Substrate-binding residues include arginine 286, histidine 318, and serine 370.

The protein belongs to the RuBisCO large chain family. Type I subfamily. Heterohexadecamer of 8 large chains and 8 small chains; disulfide-linked. The disulfide link is formed within the large subunit homodimers. Mg(2+) is required as a cofactor. Post-translationally, the disulfide bond which can form in the large chain dimeric partners within the hexadecamer appears to be associated with oxidative stress and protein turnover.

The protein localises to the plastid. The protein resides in the chloroplast. It catalyses the reaction 2 (2R)-3-phosphoglycerate + 2 H(+) = D-ribulose 1,5-bisphosphate + CO2 + H2O. The enzyme catalyses D-ribulose 1,5-bisphosphate + O2 = 2-phosphoglycolate + (2R)-3-phosphoglycerate + 2 H(+). Its function is as follows. RuBisCO catalyzes two reactions: the carboxylation of D-ribulose 1,5-bisphosphate, the primary event in carbon dioxide fixation, as well as the oxidative fragmentation of the pentose substrate in the photorespiration process. Both reactions occur simultaneously and in competition at the same active site. The chain is Ribulose bisphosphate carboxylase large chain from Hedera helix (English ivy).